The sequence spans 165 residues: MPHLDQKLPMRWRIPSRLWAWVGILALLWLGLASPVAARIDPYVNQYLRVSGPVELPLDAAGHTLTFTPEQLTDGKNRFQSACLNCHVGGATLPAPNISLSLKDLRGATPPRDTLQALMEYQRDPRSYDGSDSSYGCRPVPPSWMDDEAVNYPAPTAKRYGAGFQ.

Residues 1–38 (MPHLDQKLPMRWRIPSRLWAWVGILALLWLGLASPVAA) form the signal peptide. Positions 83, 86, 87, and 137 each coordinate heme c.

Belongs to the cytochrome c family. PsbV subfamily. Requires heme c as cofactor.

It localises to the cellular thylakoid membrane. Its function is as follows. Possible low-potential cytochrome c. The polypeptide is Cytochrome c-550-like protein (psbV2) (Synechococcus sp. (strain JA-2-3B'a(2-13)) (Cyanobacteria bacterium Yellowstone B-Prime)).